The primary structure comprises 191 residues: UPF0398 protein LCABL_17010 (191 aa).

Belongs to the UPF0398 family.

The protein is UPF0398 protein LCABL_17010 of Lacticaseibacillus casei (strain BL23) (Lactobacillus casei).